Consider the following 239-residue polypeptide: MKSGTLKTKGFKFKQFSIASSNSGMPVSTDGVLLGAWADFHHSQNLLDIGTGTGLLSLMCAQRYAHLSITAVDIDAHAMEAAQENFSHSPWHSRLHLQHGDVLKLNFTHRFDGIICNPPYFNSGEQAQATQRATARHTDTLAHDALLLRCRELLTPNGKANFVLPLTEGEQFLQLAQQQGWHLHRLCRVKPSPNKPVHRLLFELGLSTATTSEEHLTINDGSTYSAAFVKLCQDFYLKM.

It belongs to the methyltransferase superfamily. tRNA (adenine-N(6)-)-methyltransferase family.

Its subcellular location is the cytoplasm. The catalysed reaction is adenosine(37) in tRNA1(Val) + S-adenosyl-L-methionine = N(6)-methyladenosine(37) in tRNA1(Val) + S-adenosyl-L-homocysteine + H(+). Its function is as follows. Specifically methylates the adenine in position 37 of tRNA(1)(Val) (anticodon cmo5UAC). The chain is tRNA1(Val) (adenine(37)-N6)-methyltransferase from Vibrio vulnificus (strain YJ016).